The chain runs to 484 residues: Synaptic vesicle membrane protein VAT-1 homolog (484 aa).

Low complexity-rich tracts occupy residues 1-13 and 40-61; these read MSGEDAPAQQQNA and SASTEAAATAAAAADTPAPAAE. Disordered stretches follow at residues 1–65 and 402–484; these read MSGE…KAPE and IGKI…KEEN. The segment covering 411–484 has biased composition (basic and acidic residues); the sequence is PMKEEEKKEE…KKEEVKKEEN (74 aa).

It belongs to the zinc-containing alcohol dehydrogenase family. Quinone oxidoreductase subfamily.

This chain is Synaptic vesicle membrane protein VAT-1 homolog, found in Danio rerio (Zebrafish).